The primary structure comprises 153 residues: uncharacterized protein (153 aa).

The N-terminal stretch at 1 to 25 is a signal peptide; sequence MKKRQYLKSLYVALLGTLCYLSVNA.

This is an uncharacterized protein from Pasteurella multocida (strain Pm70).